The sequence spans 215 residues: Deoxyribose-phosphate aldolase (215 aa).

Asp90 acts as the Proton donor/acceptor in catalysis. The active-site Schiff-base intermediate with acetaldehyde is the Lys152. Lys181 functions as the Proton donor/acceptor in the catalytic mechanism.

The protein belongs to the DeoC/FbaB aldolase family. DeoC type 1 subfamily.

It is found in the cytoplasm. The enzyme catalyses 2-deoxy-D-ribose 5-phosphate = D-glyceraldehyde 3-phosphate + acetaldehyde. Its pathway is carbohydrate degradation; 2-deoxy-D-ribose 1-phosphate degradation; D-glyceraldehyde 3-phosphate and acetaldehyde from 2-deoxy-alpha-D-ribose 1-phosphate: step 2/2. Its function is as follows. Catalyzes a reversible aldol reaction between acetaldehyde and D-glyceraldehyde 3-phosphate to generate 2-deoxy-D-ribose 5-phosphate. This is Deoxyribose-phosphate aldolase from Ureaplasma parvum serovar 3 (strain ATCC 27815 / 27 / NCTC 11736).